The following is a 3411-amino-acid chain: MSGRKAQGKTLGVNMVRRGVRSLSNKIKQKTKQIGNRPGPSRGVQGFIFFFLFNILTGKKITAQLKRLWKMLDPRQGLAALRKVKRVVAGLMRGLSSRKRRSHDVLTVQFLILGMLLMTGGVTLMRKNRWLLLNVTSEDLGKTFSIGTGNCTTNILEAKYWCPDSMEYNCPNLSPREEPDDIDCWCYGVENVRVTYGKCDSAGRSRRSRRAIDLPTHENHGLKTRQEKWMTGRMGERQLQKIERWFVRNPFFAVTALTIAYLVGSNMTQRVVIALLVLAVGPAYSAHCIGVADRDFIEGVHGGTWVSATLEQDKCVTVMAPDKPSLDISLETVAIDGPVEARKVCYNAVLTHVKIDDKCPSTGEAHLAEENEGDNACKRTYSDRGWGNGCGLFGKGSIVACAKFTCAKSMSLFEVDQTKIQYVIKAQLHVGAKQEDWKTDIKTLKFDVLSGSQEAEFTGYGKVTLECQVQTAVDFGNSYIAEMEKESWIVDRQWAQDLTLPWQSGSGGVWREMHHLVEFEPPHAATIRVLALGDQEGSLKTALTGAMRVTKDTNDNNLYKLHGGHVSCRVKLSALTLKGTSYKMCTDKMSFVKNPTDTGHGTVVMQVKVPKGAPCKIPVIVADDLTAAINKGILVTVNPIASTNDDEVLIEVNPPFGDSYIIIGTGDSRLTYQWHKEGSSIGKLFTQTMKGAERLAVMGDAAWDFSSAGGFFTSVGKGIHTVFGSAFQGLFGGLNWITKVIMGAVLIWVGFNTRNMTMSMSMILVGVIMMFLSLGVGADQGCAINFGKRELKCGDGIFIFRDSDDWLNKYSYYPEDPVKLASIVKASFEEGKCGLNSVDSLEHEMWRSRADEINAILEENEVDISVVVQDPKNVYQRGTHPFSRIRDGLQYGWKTWGKNLVFSPGRKNGSFIIDGKSRKECPFSNRVWNSFQIEEFGTGVFTTRVYMDAVFEYTIDCDGSILGAAVNGKKSAHGSPTFWMGSHEVNGTWMIHTLEALDYKECEWPLTHTIGTSVEESEMFMPRSIGGPVSSHNHIPGYKVQTNGPWMQVPLEVKREACPGTSVIIDGNCDGRGKSTRSTTDSGKIIPEWCCRSCTMPPVSFHGSDGCWYPMEIRPMKTHESHLVRSWVTAGEIHAVPFGLVSMMIAMEVVLRKRQGPKQVLVGGVVLLGAMLVGQVTLLDLLELTVAVGLHFHEMNNGGDAMYMALIAAFSVRPGLLIGFGLRTLWSPRERLVLALGAAMVEIALGGMMGGLWKYLNAVSLCILTINAVASRKASNAILPLMALLTPVTMAEVRLATMLFCTVVIIGVLHQNSKDTSMQKTIPLVALTLTSYLGLTQPFLGLCAFLATRIFGRRSIPVNEALAATGLVGVLAGLAFQEMENFLGPIAVGGILMMLVSVAGRVDGLELKKLGEVSWEEEAEISGSSARYDVALSEQGEFKLLSEEKVPWDQVVMTSLALVGAAIHPFALLLVLAGWLFHVRRARRSGDVLWDIPTPKIIEECEHLEDGIYGIFQSTFLGASQRGVGVAQGGVFHTMWHVTRGAFLVWNGKKLIPSWASVKEDLVAYGGSWKLEGRWDGEEEVQLIAAAPGKNVVNVQTKPSLFKVRNGGEIGAVALDYPSGTSGSPIVNRNGEVIGLYGNGILVGDNSFVSAISQTEVKEEGKEELQEIPTMLKKGKTTILDFHPGAGKTRRFLPQILAECARRRLRTLVLAPTRVVLSEMKEAFHGLDVKFHTQAFSAHGSGREVIDVMCHATLTYRMLEPTRIVNWEVIIMDEAHFLDPASIAARGWAAHRARANESATILMTATPPGTSDEFPHSNGEIEDVQTDIPSEPWNTGHDWILADKRPTAWFLPSIRAANVMAASLRKAGKSVVVLNRKTFEREYPTIKQKKPDFILATDIAEMGANLCVERVLDCRTAFKPVLVDEGRKVAIKGPLRISASSAAQRRGRIGRNPNRDGDSYYYSEPTSEDNAHHVCWLEASMLLDNMEVRGGMVAPLYGVEGIKTPVSPGEMRLRDDQRKVFRELVRNCDLPVWLSWQVAKAGLKTNDRKWCFEGPEEHEILNDSGETVKCRAPGGAKKPLRPRWCDERVSSDQSALSEFIKFAEGRRGAADVLVVLSELPDFLAKKGGEAMDTISVFLHSEEGSRAYRNALSMMPEAMTIVMLFLLAGLLTSGMVIFFMSPKGISRMSMAKGTMAGCGYLMFLGGVEPTHISYIMLIFFVLMVVVIPEPGQQRSIQDNQVAFLIIGILTLVSVVAANELGMLEKTKEDLFGKKNLIPSGASPWSWPDLDLKPGAAWTVYVGIVTMLSPMLHHWIKVEYGNLSLSGIAQSASVLSFMDKGIPFMKMNISVIMLLVSGWNSITVMPLLCGIGCAMLHWSLILPGIKAQQSKLAQRRVFHGVAKNPVVDGNPTVDIEEAPEMPALYEKKLALYLLLALSLASVAMCRTPFSLDEGIVLASAALGPLIEGNTSLLWNGPMAVSMTGVMRGNYYAFVGVAYNLWKMKTARRGTANGKTLGEVWKRELNLLDKQQFELYKRTDIVEVDRDTARRHLAEGKVDTGVAVSRGTAKLRWFHERGYVKLEGRVIDLGCGRGGWCYYAAAQKEVSGVKGFTLGRDGHEKPMNVQSLGWNIITFKDKTDVHPLEPVKCDTLLCDIGESSSSSVTEGERTVRVLDTVEKWLACGVDNFCVKVLAPYMRDVLEKLELLQRRFGGTVIRNPLSRNSTHEMYYVSGARSNVTFTVNQTSRLLMRRMRRPTGKVTLEADVTLPIGTRSVETDKGPLDKEAIKERVERIKSEYMTSWFYDNDNPYRTWHYCGSYVTKTSGSAASMVNGVIKLLTYPWDKIEEVTRMAMTDTTPFGQQRVFKEKVDTRAKDPPAGTRKIMKVVNRWLFRHLAREKNPRLCTKEEFIAKVRSHAAIGAYLEEQDQWKTANEAVQDPKFWELVDEERKLHQQGRCRTCVYNMMGKREKKLSEFGKAKGSRAIWYMWLGARYLEFEALGFLNEDHWASRENSGGGVEGIGLQYLGYVIRDLAAMDGGGLYADDTAGWDTRITEADLDDEQEILNYMSPHHKKLAQAVMEMTYKNKVVKVLRPAPGGKAYMDVISRRDQRGSGQVVTYALNTITNLKVQLIRMAEAEMVIHHQHVQDCDESVLTRLEAWLTEHGCDRLRRMAVSGDDCVVRPIDDRFGLALSHLNAMSKVRKDISEWQPSKGWNDWENVPFCSHHFHELQLKDGRRIVVPCREQDELIGRGRVSPGNGWMIKETACLSKAYANMWSLMYFHKRDMRLLSLAVSSAVPTSWVPQGRTTWSIHGKGEWMTTEDRLEVWNRVWITNNPHMQDKTMVKEWRDVPYLTKRQDKLCGSLIGMTNRATWASNIHLVIHRIRTLVGQEKYTDYLTVMDRYSVDADLQPGELI.

Residues 1 to 104 (MSGRKAQGKT…LSSRKRRSHD (104 aa)) are Cytoplasmic-facing. The interval 38–72 (PGPSRGVQGFIFFFLFNILTGKKITAQLKRLWKML) is hydrophobic; homodimerization of capsid protein C. A propeptide spans 102 to 121 (SHDVLTVQFLILGMLLMTGG) (ER anchor for the capsid protein C, removed in mature form by serine protease NS3). The chain crosses the membrane as a helical span at residues 105-125 (VLTVQFLILGMLLMTGGVTLM). At 126–244 (RKNRWLLLNV…GERQLQKIER (119 aa)) the chain is on the extracellular side. N-linked (GlcNAc...) asparagine; by host glycosylation is found at Asn-134 and Asn-150. Residues 245–265 (WFVRNPFFAVTALTIAYLVGS) form a helical membrane-spanning segment. Residues 266–270 (NMTQR) lie on the Cytoplasmic side of the membrane. A helical membrane pass occupies residues 271–285 (VVIALLVLAVGPAYS). Residues 286–730 (AHCIGVADRD…TVFGSAFQGL (445 aa)) lie on the Extracellular side of the membrane. Cystine bridges form between Cys-288–Cys-315, Cys-345–Cys-401, Cys-345–Cys-406, Cys-359–Cys-390, Cys-377–Cys-401, Cys-377–Cys-406, Cys-467–Cys-568, and Cys-585–Cys-615. The interval 383–396 (DRGWGNGCGLFGKG) is fusion peptide. Residues 731–751 (FGGLNWITKVIMGAVLIWVGF) form a helical membrane-spanning segment. The Cytoplasmic segment spans residues 752 to 757 (NTRNMT). Residues 758–778 (MSMSMILVGVIMMFLSLGVGA) form a helical membrane-spanning segment. Residues 779-1132 (DQGCAINFGK…LVRSWVTAGE (354 aa)) are Extracellular-facing. Cystine bridges form between Cys-782-Cys-793, Cys-833-Cys-921, Cys-957-Cys-1002, Cys-1058-Cys-1107, Cys-1069-Cys-1091, and Cys-1090-Cys-1094. N-linked (GlcNAc...) asparagine; by host glycans are attached at residues Asn-908 and Asn-986. The chain crosses the membrane as a helical span at residues 1133-1153 (IHAVPFGLVSMMIAMEVVLRK). The Cytoplasmic portion of the chain corresponds to 1154-1201 (RQGPKQVLVGGVVLLGAMLVGQVTLLDLLELTVAVGLHFHEMNNGGDA). A helical transmembrane segment spans residues 1202–1222 (MYMALIAAFSVRPGLLIGFGL). Residues 1223-1287 (RTLWSPRERL…ILPLMALLTP (65 aa)) are Lumenal-facing. Residues 1288–1308 (VTMAEVRLATMLFCTVVIIGV) traverse the membrane as a helical segment. Topologically, residues 1309 to 1355 (LHQNSKDTSMQKTIPLVALTLTSYLGLTQPFLGLCAFLATRIFGRRS) are cytoplasmic. The chain crosses the membrane as a helical span at residues 1356 to 1376 (IPVNEALAATGLVGVLAGLAF). The Lumenal portion of the chain corresponds to 1377–1378 (QE). A helical transmembrane segment spans residues 1379–1399 (MENFLGPIAVGGILMMLVSVA). The Cytoplasmic segment spans residues 1400–1456 (GRVDGLELKKLGEVSWEEEAEISGSSARYDVALSEQGEFKLLSEEKVPWDQVVMTSL). The interacts with and activates NS3 protease stretch occupies residues 1407–1446 (LKKLGEVSWEEEAEISGSSARYDVALSEQGEFKLLSEEKV). Positions 1457 to 1477 (ALVGAAIHPFALLLVLAGWLF) form an intramembrane region, helical. Topologically, residues 1478–2157 (HVRRARRSGD…RNALSMMPEA (680 aa)) are cytoplasmic. One can recognise a Peptidase S7 domain in the interval 1485–1665 (SGDVLWDIPT…EVKEEGKEEL (181 aa)). Residues His-1537, Asp-1561, and Ser-1622 each act as charge relay system; for serine protease NS3 activity in the active site. The Helicase ATP-binding domain occupies 1669–1825 (PTMLKKGKTT…HSNGEIEDVQ (157 aa)). Residues 1673–1676 (KKGK) are important for RNA-binding. 1682-1689 (FHPGAGKT) lines the ATP pocket. The short motif at 1773–1776 (DEAH) is the DEAH box element. Residues 1820–1997 (EIEDVQTDIP…VRGGMVAPLY (178 aa)) enclose the Helicase C-terminal domain. Position 1877 is an N6-acetyllysine; by host (Lys-1877). The interval 1942 to 1961 (AAQRRGRIGRNPNRDGDSYY) is disordered. Residues 2158 to 2178 (MTIVMLFLLAGLLTSGMVIFF) traverse the membrane as a helical segment. Residues 2179–2186 (MSPKGISR) are Lumenal-facing. An intramembrane region (helical) is located at residues 2187–2207 (MSMAKGTMAGCGYLMFLGGVE). The Lumenal portion of the chain corresponds to 2208–2209 (PT). Residues 2210 to 2230 (HISYIMLIFFVLMVVVIPEPG) form a helical membrane-spanning segment. Residues 2231-2241 (QQRSIQDNQVA) lie on the Cytoplasmic side of the membrane. The helical transmembrane segment at 2242 to 2256 (FLIIGILTLVSVVAA) threads the bilayer. Over 2257 to 2293 (NELGMLEKTKEDLFGKKNLIPSGASPWSWPDLDLKPG) the chain is Lumenal. The segment at residues 2294-2314 (AAWTVYVGIVTMLSPMLHHWI) is an intramembrane region (helical). The Lumenal portion of the chain corresponds to 2315–2360 (KVEYGNLSLSGIAQSASVLSFMDKGIPFMKMNISVIMLLVSGWNSI). The helical transmembrane segment at 2361-2380 (TVMPLLCGIGCAMLHWSLIL) threads the bilayer. At 2381–2421 (PGIKAQQSKLAQRRVFHGVAKNPVVDGNPTVDIEEAPEMPA) the chain is on the cytoplasmic side. Residues 2422–2442 (LYEKKLALYLLLALSLASVAM) traverse the membrane as a helical segment. Over 2443 to 2445 (CRT) the chain is Lumenal. Residues 2446 to 2466 (PFSLDEGIVLASAALGPLIEG) traverse the membrane as a helical segment. Residues 2467–3411 (NTSLLWNGPM…DADLQPGELI (945 aa)) are Cytoplasmic-facing. The mRNA cap 0-1 NS5-type MT domain occupies 2507–2771 (GTANGKTLGE…DVTLPIGTRS (265 aa)). Ser-2562 is a binding site for S-adenosyl-L-methionine. Residue Ser-2562 is modified to Phosphoserine. The active-site For 2'-O-MTase activity is Lys-2567. S-adenosyl-L-methionine-binding residues include Gly-2592, Trp-2593, Thr-2610, Leu-2611, Asp-2637, and Val-2638. The active-site For 2'-O-MTase activity is the Asp-2652. Ile-2653 provides a ligand contact to S-adenosyl-L-methionine. Active-site for 2'-O-MTase activity residues include Lys-2688 and Glu-2724. Tyr-2726 lines the S-adenosyl-L-methionine pocket. The short motif at 2878-2911 (RKIMKVVNRWLFRHLAREKNPRLCTKEEFIAKVR) is the Nuclear localization signal element. Glu-2945, His-2949, Cys-2954, and Cys-2957 together coordinate Zn(2+). The RdRp catalytic domain occupies 3035-3187 (GGLYADDTAG…RPIDDRFGLA (153 aa)). Zn(2+)-binding residues include His-3222, Cys-3238, and Cys-3357.

The protein in the N-terminal section; belongs to the class I-like SAM-binding methyltransferase superfamily. mRNA cap 0-1 NS5-type methyltransferase family. As to quaternary structure, homodimer. Interacts (via N-terminus) with host EXOC1 (via C-terminus); this interaction results in EXOC1 degradation through the proteasome degradation pathway. Forms heterodimers with envelope protein E in the endoplasmic reticulum and Golgi. In terms of assembly, homodimer; in the endoplasmic reticulum and Golgi. Interacts with protein prM. Interacts with non-structural protein 1. As to quaternary structure, homodimer; Homohexamer when secreted. Interacts with envelope protein E. Interacts (via N-terminus) with serine protease NS3. In terms of assembly, forms a heterodimer with serine protease NS3. May form homooligomers. As to quaternary structure, forms a heterodimer with NS2B. Interacts with non-structural protein 2A (via N-terminus). Interacts with NS4B. Interacts with unphosphorylated RNA-directed RNA polymerase NS5; this interaction stimulates RNA-directed RNA polymerase NS5 guanylyltransferase activity. NS3 interacts with host PDCD6IP; this interaction contributes to virion release. Interacts with serine protease NS3. In terms of assembly, homodimer. Interacts with host STAT2; this interaction prevents the establishment of cellular antiviral state. Interacts with serine protease NS3. Interacts with host TRIM23; this interaction leads to NS5 ubiquitination. Post-translationally, specific enzymatic cleavages in vivo yield mature proteins. The nascent capsid protein C contains a C-terminal hydrophobic domain that act as a signal sequence for translocation of prM into the lumen of the ER. Mature capsid protein C is cleaved at a site upstream of this hydrophobic domain by NS3. prM is cleaved in post-Golgi vesicles by a host furin, releasing the mature small envelope protein M, and peptide pr. Non-structural protein 2A-alpha, a C-terminally truncated form of non-structural protein 2A, results from partial cleavage by NS3. Specific enzymatic cleavages in vivo yield mature proteins peptide 2K acts as a signal sequence and is removed from the N-terminus of NS4B by the host signal peptidase in the ER lumen. Signal cleavage at the 2K-4B site requires a prior NS3 protease-mediated cleavage at the 4A-2K site. In terms of processing, cleaved in post-Golgi vesicles by a host furin, releasing the mature small envelope protein M, and peptide pr. This cleavage is incomplete as up to 30% of viral particles still carry uncleaved prM. N-glycosylated. Post-translationally, N-glycosylated. The excreted form is glycosylated and this is required for efficient secretion of the protein from infected cells. In terms of processing, polyubiquitinated; ubiquitination is probably mediated by host TRIM23 and is prerequisite for NS5-STAT2 interaction. NS5 is not ISGylated or sumoylated. Acetylated by host KAT5. Acetylation modulates NS3 RNA-binding and unwinding activities and plays an important positive role for viral replication. Post-translationally, phosphorylated on serines residues. This phosphorylation may trigger NS5 nuclear localization.

Its subcellular location is the virion. It is found in the host nucleus. It localises to the host cytoplasm. The protein resides in the host perinuclear region. The protein localises to the secreted. Its subcellular location is the virion membrane. It is found in the host endoplasmic reticulum membrane. It carries out the reaction Selective hydrolysis of -Xaa-Xaa-|-Yaa- bonds in which each of the Xaa can be either Arg or Lys and Yaa can be either Ser or Ala.. The enzyme catalyses RNA(n) + a ribonucleoside 5'-triphosphate = RNA(n+1) + diphosphate. It catalyses the reaction a ribonucleoside 5'-triphosphate + H2O = a ribonucleoside 5'-diphosphate + phosphate + H(+). The catalysed reaction is ATP + H2O = ADP + phosphate + H(+). It carries out the reaction a 5'-end (5'-triphosphoguanosine)-ribonucleoside in mRNA + S-adenosyl-L-methionine = a 5'-end (N(7)-methyl 5'-triphosphoguanosine)-ribonucleoside in mRNA + S-adenosyl-L-homocysteine. The enzyme catalyses a 5'-end (N(7)-methyl 5'-triphosphoguanosine)-ribonucleoside in mRNA + S-adenosyl-L-methionine = a 5'-end (N(7)-methyl 5'-triphosphoguanosine)-(2'-O-methyl-ribonucleoside) in mRNA + S-adenosyl-L-homocysteine + H(+). Plays a role in virus budding by binding to the cell membrane and gathering the viral RNA into a nucleocapsid that forms the core of a mature virus particle. During virus entry, may induce genome penetration into the host cytoplasm after hemifusion induced by the surface proteins. Can migrate to the cell nucleus where it modulates host functions. Functionally, inhibits RNA silencing by interfering with host Dicer. In terms of biological role, prevents premature fusion activity of envelope proteins in trans-Golgi by binding to envelope protein E at pH6.0. After virion release in extracellular space, gets dissociated from E dimers. Its function is as follows. Acts as a chaperone for envelope protein E during intracellular virion assembly by masking and inactivating envelope protein E fusion peptide. prM is the only viral peptide matured by host furin in the trans-Golgi network probably to avoid catastrophic activation of the viral fusion activity in acidic Golgi compartment prior to virion release. prM-E cleavage is inefficient, and many virions are only partially matured. These uncleaved prM would play a role in immune evasion. May play a role in virus budding. Exerts cytotoxic effects by activating a mitochondrial apoptotic pathway through M ectodomain. May display a viroporin activity. Functionally, binds to host cell surface receptor and mediates fusion between viral and cellular membranes. Envelope protein is synthesized in the endoplasmic reticulum in the form of heterodimer with protein prM. They play a role in virion budding in the ER, and the newly formed immature particle is covered with 60 spikes composed of heterodimer between precursor prM and envelope protein E. The virion is transported to the Golgi apparatus where the low pH causes dissociation of PrM-E heterodimers and formation of E homodimers. prM-E cleavage is inefficient, and many virions are only partially matured. These uncleaved prM would play a role in immune evasion. In terms of biological role, involved in immune evasion, pathogenesis and viral replication. Once cleaved off the polyprotein, is targeted to three destinations: the viral replication cycle, the plasma membrane and the extracellular compartment. Essential for viral replication. Required for formation of the replication complex and recruitment of other non-structural proteins to the ER-derived membrane structures. Excreted as a hexameric lipoparticle that plays a role against host immune response. Antagonizing the complement function. Binds to the host macrophages and dendritic cells. Inhibits signal transduction originating from Toll-like receptor 3 (TLR3). Its function is as follows. Component of the viral RNA replication complex that functions in virion assembly and antagonizes the host immune response. Required cofactor for the serine protease function of NS3. May have membrane-destabilizing activity and form viroporins. Functionally, displays three enzymatic activities: serine protease, NTPase and RNA helicase. NS3 serine protease, in association with NS2B, performs its autocleavage and cleaves the polyprotein at dibasic sites in the cytoplasm: C-prM, NS2A-NS2B, NS2B-NS3, NS3-NS4A, NS4A-2K and NS4B-NS5. NS3 RNA helicase binds RNA and unwinds dsRNA in the 3' to 5' direction. Also plays a role in virus assembly. In terms of biological role, regulates the ATPase activity of the NS3 helicase activity. NS4A allows NS3 helicase to conserve energy during unwinding. Its function is as follows. Functions as a signal peptide for NS4B and is required for the interferon antagonism activity of the latter. Induces the formation of ER-derived membrane vesicles where the viral replication takes place. Inhibits interferon (IFN)-induced host STAT1 phosphorylation and nuclear translocation, thereby preventing the establishment of cellular antiviral state by blocking the IFN-alpha/beta pathway. Functionally, replicates the viral (+) and (-) RNA genome, and performs the capping of genomes in the cytoplasm. NS5 methylates viral RNA cap at guanine N-7 and ribose 2'-O positions. Besides its role in RNA genome replication, also prevents the establishment of cellular antiviral state by blocking the interferon-alpha/beta (IFN-alpha/beta) signaling pathway. IFN-I induces binding of NS5 to host IFN-activated transcription factor STAT2, preventing its transcriptional activity. Host TRIM23 is the E3 ligase that interacts with and polyubiquitinates NS5 to promote its binding to STAT2 and trigger IFN-I signaling inhibition. The polypeptide is Genome polyprotein (Aedes aegypti (Yellowfever mosquito)).